The primary structure comprises 221 residues: uncharacterized protein (221 aa).

The tract at residues 40–162 (TIEVEPSPVQ…EPPEKVELSP (123 aa)) is disordered. Residues 47-60 (PVQQDNPPISSEQA) show a composition bias toward polar residues. Positions 82–92 (SSAQQEATAQT) are enriched in low complexity.

This is an uncharacterized protein from Homo sapiens (Human).